Consider the following 249-residue polypeptide: uncharacterized protein (249 aa).

In terms of domain architecture, S4 RNA-binding spans 7 to 64 (PRVHVFLAEKGVGSRRFCEELIRKKLVRVNNTIAKLGDKVTLGDRIIYKKQIFVFKDF). Asp-112 serves as the catalytic Nucleophile.

This sequence belongs to the pseudouridine synthase RsuA family.

It catalyses the reaction a uridine in RNA = a pseudouridine in RNA. This is an uncharacterized protein from Borreliella burgdorferi (strain ATCC 35210 / DSM 4680 / CIP 102532 / B31) (Borrelia burgdorferi).